The sequence spans 334 residues: Stabilizer of axonemal microtubules 3 (334 aa).

Disordered stretches follow at residues 81-105, 128-153, and 233-260; these read AYVPKTHGGPCAQPRAPEPADPTRT, YQSSETRAQYTGSPSGDPRAPEYFGP, and QVWSHGPQRPPCPRSSRPPRPPRVRVPR. Polar residues predominate over residues 128 to 141; that stretch reads YQSSETRAQYTGSP. The span at 240–251 shows a compositional bias: pro residues; sequence QRPPCPRSSRPP.

The protein is Stabilizer of axonemal microtubules 3 of Homo sapiens (Human).